A 4334-amino-acid chain; its full sequence is Cytoplasmic dynein 2 heavy chain 1 (4334 aa).

Positions 1–1704 (MSSDSRKTFV…KVAMAEATFD (1704 aa)) are stem. 150–157 (LGTAVRKG) serves as a coordination point for ATP. Residues 1026–1097 (QEAKGLTAKL…AHLEEQKGNL (72 aa)) are a coiled coil. AAA regions lie at residues 1705–1929 (YTWE…VLGI), 1996–2211 (KALA…KAFQ), 2299–2544 (GMDE…WING), and 2641–2882 (GYER…SSGS). ATP contacts are provided by residues 1743 to 1750 (GPAGTGKT), 2034 to 2041 (GPSGSGKS), 2334 to 2341 (GPEGCGKG), and 2679 to 2686 (GNSGVGRR). The interval 2897-3185 (QIYNRKRTQV…ISVDKAESVL (289 aa)) is stalk. 2 coiled-coil regions span residues 2930 to 2998 (LSAE…SEVQ) and 3120 to 3199 (ERVS…RGEK). 2 AAA regions span residues 3260–3492 (LSSE…TVEK) and 3701–3917 (MSSF…VITL).

This sequence belongs to the dynein heavy chain family. In terms of assembly, the cytoplasmic dynein complex 2 is probably composed by a DHC1B homodimer and a number of D1BLIC light intermediate chains. Interacts with FAP133, FLA10 and LC8.

The protein localises to the cytoplasm. Its subcellular location is the cytoskeleton. It is found in the flagellum basal body. It localises to the cell projection. The protein resides in the cilium. The protein localises to the flagellum membrane. Its function is as follows. May function as a motor for intraflagellar retrograde transport. Functions in flagellar biogenesis. The protein is Cytoplasmic dynein 2 heavy chain 1 (DHC1B) of Chlamydomonas reinhardtii (Chlamydomonas smithii).